We begin with the raw amino-acid sequence, 173 residues long: Alkyl hydroperoxide reductase AhpD (173 aa).

The Proton donor role is filled by C131. C131 and C134 are disulfide-bonded. The active-site Cysteine sulfenic acid (-SOH) intermediate is C134.

The protein belongs to the AhpD family.

It carries out the reaction N(6)-[(R)-dihydrolipoyl]-L-lysyl-[lipoyl-carrier protein] + a hydroperoxide = N(6)-[(R)-lipoyl]-L-lysyl-[lipoyl-carrier protein] + an alcohol + H2O. Antioxidant protein with alkyl hydroperoxidase activity. Required for the reduction of the AhpC active site cysteine residues and for the regeneration of the AhpC enzyme activity. This chain is Alkyl hydroperoxide reductase AhpD, found in Maricaulis maris (strain MCS10) (Caulobacter maris).